The following is an 84-amino-acid chain: U2-theraphotoxin-Cg1b 1 (84 aa).

The N-terminal stretch at 1 to 21 is a signal peptide; sequence MKVSVLITLAVWGVMFLLTSA. Positions 22-48 are excised as a propeptide; it reads QERGSDQMDSPAWLKSMERIFQSEERE. Disulfide bonds link Cys-49-Cys-63, Cys-56-Cys-68, and Cys-62-Cys-76.

This sequence belongs to the neurotoxin 10 (Hwtx-1) family. 06 (F4b) subfamily. Expressed by the venom gland.

The protein resides in the secreted. Functionally, probable ion channel inhibitor. This chain is U2-theraphotoxin-Cg1b 1, found in Chilobrachys guangxiensis (Chinese earth tiger tarantula).